The following is a 168-amino-acid chain: MNSKGQYPTQPTYPVQPPGNPVYPQTLHLPQAPPYTDAPPAYSELYRPSFVHPGAATVPTMSAAFPGASLYLPMAQSVAVGPLGSTIPMAYYPVGPIYPPGSTVLVEGGYDAGARFGAGATAGNIPPPPPGCPPNAAQLAVMQGANVLVTQRKGNFFMGGSDGGYTIW.

The span at 1–13 (MNSKGQYPTQPTY) shows a compositional bias: low complexity. A disordered region spans residues 1-25 (MNSKGQYPTQPTYPVQPPGNPVYPQ). Residues 39 to 42 (PPAY) carry the PPAY motif. At S77 the chain carries Phosphoserine.

As to quaternary structure, interacts with SOX6. Interacts with DAZ1 and DAZL. Interacts with IL17RB. May interact with FAM168B. Interacts with INCA1. Interacts with EIF4G1 and EIF4G2. Interacts (via PPAY motif) with NEDD4 (via WW domains). Interacts with transcription factor TCF4; the interaction results in localization of DAZAP2 to the nucleus. Interacts with transcription factors TCF7 and TCF7L1. Interacts with transcription factor LEF1. Interacts with serine/threonine-protein kinase HIPK2; the interaction results in phosphorylation of DAZAP2 which causes localization of DAZAP2 to the nucleus, reduces interaction of DAZAP2 with HIPK2 and prevents DAZAP2-dependent degradation of HIPK2. Interacts with ubiquitin ligase SIAH1; the interaction is decreased following phosphorylation of DAZAP2 by HIPK2. Interacts with TP53; the interaction is triggered by DNA damage. Ubiquitinated by SMURF2, leading to proteasomal degradation. Ubiquitinated by NEDD4, leading to proteasomal degradation. In terms of processing, following DNA damage, phosphorylated by HIPK2 which promotes DAZAP2 localization to the nucleus, reduces interaction of DAZAP2 with HIPK2 and SIAH1, and prevents DAZAP2-dependent ubiquitination of HIPK2 by E3 ubiquitin-protein ligase SIAH1 and subsequent HIPK2 proteasomal degradation.

It is found in the cytoplasm. The protein resides in the nucleus. Its subcellular location is the nucleus speckle. It localises to the nuclear body. The protein localises to the stress granule. Its function is as follows. In unstressed cells, promotes SIAH1-mediated polyubiquitination and degradation of the serine/threonine-protein kinase HIPK2, probably by acting as a loading factor that potentiates complex formation between HIPK2 and ubiquitin ligase SIAH1. In response to DNA damage, localizes to the nucleus following phosphorylation by HIPK2 and modulates the expression of a subset of TP53/p53 target genes by binding to TP53 at target gene promoters. This limits the expression of a number of cell death-mediating TP53 target genes, reducing DNA damage-induced cell death. Enhances the binding of transcription factor TCF7L2/TCF4, a Wnt signaling pathway effector, to the promoters of target genes. Plays a role in stress granule formation. In Bos taurus (Bovine), this protein is DAZ-associated protein 2.